The chain runs to 353 residues: Photosystem II protein D1 (353 aa).

At Thr-2 the chain carries N-acetylthreonine. Position 2 is a phosphothreonine (Thr-2). Transmembrane regions (helical) follow at residues 29 to 46, 118 to 133, and 142 to 156; these read YIGWFGVLMIPTLLTATS, HFLLGVACYMGREWEL, and WIAVAYSAPVAAATA. His-118 serves as a coordination point for chlorophyll a. Tyr-126 contributes to the pheophytin a binding site. Residues Asp-170 and Glu-189 each coordinate [CaMn4O5] cluster. Residues 197–218 form a helical membrane-spanning segment; the sequence is FHMLGVAGVFGGSLFSAMHGSL. Chlorophyll a is bound at residue His-198. A quinone is bound by residues His-215 and 264 to 265; that span reads SF. Residue His-215 coordinates Fe cation. His-272 is a Fe cation binding site. A helical membrane pass occupies residues 274 to 288; that stretch reads FLAAWPVVGIWFTAL. Residues His-332, Glu-333, Asp-342, and Ala-344 each contribute to the [CaMn4O5] cluster site. A propeptide spanning residues 345-353 is cleaved from the precursor; it reads ALEVPSLNG.

It belongs to the reaction center PufL/M/PsbA/D family. PSII is composed of 1 copy each of membrane proteins PsbA, PsbB, PsbC, PsbD, PsbE, PsbF, PsbH, PsbI, PsbJ, PsbK, PsbL, PsbM, PsbT, PsbX, PsbY, PsbZ, Psb30/Ycf12, at least 3 peripheral proteins of the oxygen-evolving complex and a large number of cofactors. It forms dimeric complexes. It depends on The D1/D2 heterodimer binds P680, chlorophylls that are the primary electron donor of PSII, and subsequent electron acceptors. It shares a non-heme iron and each subunit binds pheophytin, quinone, additional chlorophylls, carotenoids and lipids. D1 provides most of the ligands for the Mn4-Ca-O5 cluster of the oxygen-evolving complex (OEC). There is also a Cl(-1) ion associated with D1 and D2, which is required for oxygen evolution. The PSII complex binds additional chlorophylls, carotenoids and specific lipids. as a cofactor. In terms of processing, tyr-161 forms a radical intermediate that is referred to as redox-active TyrZ, YZ or Y-Z. Post-translationally, C-terminally processed by CTPA; processing is essential to allow assembly of the oxygen-evolving complex and thus photosynthetic growth.

It is found in the plastid. The protein localises to the chloroplast thylakoid membrane. It carries out the reaction 2 a plastoquinone + 4 hnu + 2 H2O = 2 a plastoquinol + O2. Its function is as follows. Photosystem II (PSII) is a light-driven water:plastoquinone oxidoreductase that uses light energy to abstract electrons from H(2)O, generating O(2) and a proton gradient subsequently used for ATP formation. It consists of a core antenna complex that captures photons, and an electron transfer chain that converts photonic excitation into a charge separation. The D1/D2 (PsbA/PsbD) reaction center heterodimer binds P680, the primary electron donor of PSII as well as several subsequent electron acceptors. This is Photosystem II protein D1 from Lolium perenne (Perennial ryegrass).